Here is a 46-residue protein sequence, read N- to C-terminus: Mu-segestritoxin-Sf1h (46 aa).

Intrachain disulfides connect cysteine 3–cysteine 19, cysteine 10–cysteine 22, cysteine 18–cysteine 42, and cysteine 24–cysteine 40. Positions arginine 31–tryptophan 33 are keys region for toxin activity.

It belongs to the neurotoxin 16 (SFI) family. In terms of tissue distribution, expressed by the venom gland.

The protein resides in the secreted. Its function is as follows. Insecticidal toxin. It inhibits insect voltage-gated sodium channels (Nav) by partially blocking the channel pore in DUM neurons from the American cockroach, not by acting as a gating modifier. The inhibition is only partially reversible after prolonged washout. In vivo, the toxin causes flaccid paralysis followed by death when injected into Heliothis virescens larvae. It also causes uncoordinated movements followed by full paralysis to sheep blowflies (Lucilia cuprina). When the toxin is fused to snowdrop lectin, it is orally active against larvae of the tomato moth (Laconobia oleracea), the rice brown planthopper (Nilaparvata lugens), and the peach-potato aphid (Myzus persicae). The polypeptide is Mu-segestritoxin-Sf1h (Segestria florentina (Tube-web spider)).